The sequence spans 310 residues: Methionyl-tRNA formyltransferase (310 aa).

Residue 109 to 112 participates in (6S)-5,6,7,8-tetrahydrofolate binding; the sequence is SLLP.

Belongs to the Fmt family.

It carries out the reaction L-methionyl-tRNA(fMet) + (6R)-10-formyltetrahydrofolate = N-formyl-L-methionyl-tRNA(fMet) + (6S)-5,6,7,8-tetrahydrofolate + H(+). In terms of biological role, attaches a formyl group to the free amino group of methionyl-tRNA(fMet). The formyl group appears to play a dual role in the initiator identity of N-formylmethionyl-tRNA by promoting its recognition by IF2 and preventing the misappropriation of this tRNA by the elongation apparatus. The polypeptide is Methionyl-tRNA formyltransferase (Alkaliphilus oremlandii (strain OhILAs) (Clostridium oremlandii (strain OhILAs))).